The chain runs to 233 residues: Short chain dehydrogenase trt9 (233 aa).

The NADP(+) site is built by aspartate 33, arginine 95, tyrosine 127, lysine 131, and valine 160. The active-site Proton donor is tyrosine 127. The active-site Lowers pKa of active site Tyr is the lysine 131.

This sequence belongs to the short-chain dehydrogenases/reductases (SDR) family.

It participates in secondary metabolite biosynthesis; terpenoid biosynthesis. In terms of biological role, short chain dehydrogenase; part of the gene cluster that mediates the biosynthesis of terretonin, a fungal meroterpenoid that acts as a mycotoxin. The first step of the pathway is the synthesis of 3,5-dimethylorsellinic acid (DMOA) by the polyketide synthase trt4. DMOA is then prenylated into farnesyl-DMOA by the polyprenyl transferase trt2. Methylation by the methyltransferase trt5 then leads to farnesyl-DMOA methyl ester which is further subject to epoxidation by the FAD-dependent monooxygenase trt8 to yield epoxyfarnesyl-DMOA methyl ester. Cyclization of epoxyfarnesyl-DMOA methyl ester by the terpene cyclase trt1 leads to a tetracycle intermediate which is in turn converted to preterretonin. Dehydrogenase trt9 comes next to transform preterretonin to preterrenoid. The FAD-dependent monooxygenase trt3 is then required for the C-hydroxylation at C16 of preterrenoid to yield terrenoid. The cytochrome P450 trt6 catalyzes three successive oxidations to transform terrenoid into an unstable intermediate, which then undergoes the D-ring expansion and unusual rearrangement of the methoxy group to afford the core skeleton of terretonin. Trt14 catalyzes the D-ring expansion of terretonin involving intramolecular methoxy rearrangement as well as the hydrolysis of the expanded D-ring and the methyl ester moiety. Finally, the nonheme iron-dependent dioxygenase trt7 accomplishes the last two oxidation reactions steps to complete the biosynthesis of terretonin. Terretonin C is produced via spontaneous decarboxylation of the terretonin precursor. Another shunt product of the terretonin biosynthesis is dihydrofarnesyl-DMOA, derived from epoxyfarnesyl-DMOA through hydrolysis of the epoxide. In Aspergillus terreus (strain NIH 2624 / FGSC A1156), this protein is Short chain dehydrogenase trt9.